The sequence spans 44 residues: Antibacterial protein 3 (44 aa).

An N-formylmethionine modification is found at M1.

This sequence belongs to the staphylococcal hemolytic protein family.

The protein localises to the secreted. Functionally, has hemolytic activity and also inhibits the growth of gonococci. The protein is Antibacterial protein 3 of Staphylococcus haemolyticus.